A 334-amino-acid polypeptide reads, in one-letter code: Ribosomal RNA small subunit methyltransferase H (334 aa).

A disordered region spans residues 1–21 (MNALPIRTAAPSGHSGGHSST). Residues 52-54 (GGY), Asp-71, Phe-98, Asp-119, and Gln-126 contribute to the S-adenosyl-L-methionine site.

The protein belongs to the methyltransferase superfamily. RsmH family.

It is found in the cytoplasm. The enzyme catalyses cytidine(1402) in 16S rRNA + S-adenosyl-L-methionine = N(4)-methylcytidine(1402) in 16S rRNA + S-adenosyl-L-homocysteine + H(+). In terms of biological role, specifically methylates the N4 position of cytidine in position 1402 (C1402) of 16S rRNA. The chain is Ribosomal RNA small subunit methyltransferase H from Granulibacter bethesdensis (strain ATCC BAA-1260 / CGDNIH1).